We begin with the raw amino-acid sequence, 1013 residues long: Poly [ADP-ribose] polymerase 1 (1013 aa).

PARP-type zinc fingers lie at residues 10–92 (YKAE…ESGG) and 113–203 (FAVE…PAVK). Zn(2+)-binding residues include cysteine 22, cysteine 25, histidine 54, cysteine 57, cysteine 125, cysteine 128, histidine 159, and cysteine 162. The segment at 202 to 228 (VKSEGKRKADEVDGGVSKKQKKEDEKL) is disordered. The Nuclear localization signal motif lies at 207–209 (KRK). The 135-residue stretch at 219–353 (KKQKKEDEKL…FKRQDRVFPK (135 aa)) folds into the PADR1 zinc-binding domain. A zinc ribbon region spans residues 284–326 (GSLKPCETCKGQLVFKSDAYYCTGDISAWTKCVFKTQTPDRKD). Cysteine 289, cysteine 292, cysteine 305, and cysteine 315 together coordinate Zn(2+). A disordered region spans residues 353-385 (KDAPPAAATPSSGSTTSAATSVSSASKNLTEAP). The segment covering 356 to 378 (PPAAATPSSGSTTSAATSVSSAS) has biased composition (low complexity). Residues 365-523 (GSTTSAATSV…EGGSKSKKMK (159 aa)) are automodification domain. The BRCT domain occupies 385-461 (PADKPLTGMK…RVVADDFLTD (77 aa)). A polyADP-ribosyl glutamic acid mark is found at glutamate 413, glutamate 435, glutamate 444, glutamate 445, glutamate 464, glutamate 471, glutamate 484, and glutamate 488. Positions 494–507 (AATKSTGAHSSKST) are enriched in low complexity. The tract at residues 494-522 (AATKSTGAHSSKSTGKVKEEEGGSKSKKM) is disordered. Residues glutamate 512 and glutamate 513 each carry the polyADP-ribosyl glutamic acid modification. A WGR domain is found at 541–637 (CAHVLEQNGK…SNFTKYPNKF (97 aa)). A PARP alpha-helical domain is found at 661 to 778 (KSQLEKPVQD…DIEVAYSLLR (118 aa)). The region spanning 787 to 1013 (DPIDINYEKL…IRFNYQTSLW (227 aa)) is the PARP catalytic domain. NAD(+) contacts are provided by residues 861–863 (HGS), glycine 870, arginine 877, and serine 903. Residue glutamate 987 is the For poly [ADP-ribose] polymerase activity of the active site.

The protein belongs to the ARTD/PARP family. Homodimer; PARP-type zinc-fingers from separate parp1 molecules form a dimer module that specifically recognizes DNA strand breaks. In terms of processing, poly-ADP-ribosylated on serine, glutamate and aspartate residues by autocatalysis. Auto-ADP-ribosylation on serine takes place following interaction with HPF1. Auto poly-ADP-ribosylation on serine residues promotes its dissociation from chromatin.

The protein resides in the chromosome. Its subcellular location is the nucleus. The protein localises to the nucleolus. It localises to the cytoplasm. It is found in the cytosol. The enzyme catalyses NAD(+) + (ADP-D-ribosyl)n-acceptor = nicotinamide + (ADP-D-ribosyl)n+1-acceptor + H(+).. It catalyses the reaction L-seryl-[protein] + NAD(+) = O-(ADP-D-ribosyl)-L-seryl-[protein] + nicotinamide + H(+). The catalysed reaction is L-aspartyl-[protein] + NAD(+) = 4-O-(ADP-D-ribosyl)-L-aspartyl-[protein] + nicotinamide. It carries out the reaction L-glutamyl-[protein] + NAD(+) = 5-O-(ADP-D-ribosyl)-L-glutamyl-[protein] + nicotinamide. The enzyme catalyses L-tyrosyl-[protein] + NAD(+) = O-(ADP-D-ribosyl)-L-tyrosyl-[protein] + nicotinamide + H(+). It catalyses the reaction L-histidyl-[protein] + NAD(+) = N(tele)-(ADP-D-ribosyl)-L-histidyl-[protein] + nicotinamide + H(+). Its activity is regulated as follows. ADP-ribosyltransferase activity is regulated via an allosteric activation mechanism. In absence of activation signal, parp1 is autoinhibited by the PARP alpha-helical domain (also named HD region), which prevents effective NAD(+)-binding. Activity is highly stimulated by signals, such as DNA strand breaks. Binding to damaged DNA unfolds the PARP alpha-helical domain, relieving autoinhibition. Poly-ADP-ribosyltransferase activity is tightly regulated and parp1 is removed from damaged chromatin following initial poly-ADP-ribosylation of chromatin to avoid prolonged residence (trapping) that has cytotoxic consequences. A number of factors or post-translational modifications (auto-poly-ADP-ribosylation) promote parp1 removal from chromatin. Poly-ADP-ribosyltransferase that mediates poly-ADP-ribosylation of proteins and plays a key role in DNA repair. Mediates glutamate, aspartate, serine, histidine or tyrosine ADP-ribosylation of proteins: the ADP-D-ribosyl group of NAD(+) is transferred to the acceptor carboxyl group of target residues and further ADP-ribosyl groups are transferred to the 2'-position of the terminal adenosine moiety, building up a polymer with an average chain length of 20-30 units. Serine ADP-ribosylation of proteins constitutes the primary form of ADP-ribosylation of proteins in response to DNA damage. Specificity for the different amino acids is conferred by interacting factors, such as hpf1 and nmnat1. Following interaction with hpf1, catalyzes serine ADP-ribosylation of target proteins; hpf1 confers serine specificity by completing the parp1 active site. Also catalyzes tyrosine ADP-ribosylation of target proteins following interaction with hpf1. Following interaction with nmnat1, catalyzes glutamate and aspartate ADP-ribosylation of target proteins; nmnat1 confers glutamate and aspartate specificity. Parp1 initiates the repair of DNA breaks: recognizes and binds DNA breaks within chromatin and recruits hpf1, licensing serine ADP-ribosylation of target proteins, such as histones (H2BS6ADPr and H3S10ADPr), thereby promoting decompaction of chromatin and the recruitment of repair factors leading to the reparation of DNA strand breaks. In addition to base excision repair (BER) pathway, also involved in double-strand breaks (DSBs) repair. Mediates the poly-ADP-ribosylation of a number of proteins. In addition to proteins, also able to ADP-ribosylate DNA: catalyzes ADP-ribosylation of DNA strand break termini containing terminal phosphates and a 2'-OH group in single- and double-stranded DNA, respectively. Parp1-mediated DNA repair in neurons plays a role in sleep: senses DNA damage in neurons and promotes sleep, facilitating efficient DNA repair. In addition to DNA repair, also involved in other processes, such as transcription regulation, programmed cell death, membrane repair, adipogenesis and innate immunity. Acts as a repressor of transcription: binds to nucleosomes and modulates chromatin structure in a manner similar to histone H1, thereby altering RNA polymerase II. Acts both as a positive and negative regulator of transcription elongation, depending on the context. Poly-ADP-ribose chains generated by parp1 also play a role in poly-ADP-ribose-dependent cell death, a process named parthanatos. Also acts as a negative regulator of the cGAS-STING pathway by mediating poly-ADP-ribosylation and inactivation of cgas. Acts as a negative regulator of adipogenesis by catalyzing poly ADP-ribosylation of histone H2B on 'Glu-35' (H2BE35ADPr). This chain is Poly [ADP-ribose] polymerase 1, found in Danio rerio (Zebrafish).